We begin with the raw amino-acid sequence, 696 residues long: DNA topoisomerase 6 subunit B (696 aa).

Positions 1–36 (MDDDAGDGAASGGTKRKVTAASSSAAAKGKAAGKGK) are disordered. A compositionally biased stretch (low complexity) spans 20–36 (AASSSAAAKGKAAGKGK). ATP is bound by residues asparagine 88, aspartate 187, 208 to 209 (TK), 217 to 224 (GKFGLGAK), and lysine 543.

It belongs to the TOP6B family. Homodimer. Heterotetramer of two TOP6A and two TOP6B subunits. Interacts with SPO11-4.

The protein resides in the nucleus. The enzyme catalyses ATP-dependent breakage, passage and rejoining of double-stranded DNA.. Component of the DNA topoisomerase VI involved in chromatin organization and progression of endoreduplication cycles. Relaxes both positive and negative superturns and exhibits a strong decatenase activity. The B subunit binds ATP. The chain is DNA topoisomerase 6 subunit B (TOP6B) from Oryza sativa subsp. japonica (Rice).